A 234-amino-acid polypeptide reads, in one-letter code: Peptidase E (234 aa).

Residues Ser123, Asp138, and His160 each act as charge relay system in the active site.

It belongs to the peptidase S51 family.

The protein localises to the cytoplasm. The catalysed reaction is Dipeptidase E catalyzes the hydrolysis of dipeptides Asp-|-Xaa. It does not act on peptides with N-terminal Glu, Asn or Gln, nor does it cleave isoaspartyl peptides.. Its function is as follows. Hydrolyzes dipeptides containing N-terminal aspartate residues. May play a role in allowing the cell to use peptide aspartate to spare carbon otherwise required for the synthesis of the aspartate family of amino acids. The protein is Peptidase E of Pasteurella multocida (strain Pm70).